An 89-amino-acid polypeptide reads, in one-letter code: MNCLMLIFVVFLLAFGVECKKDDYPVDTAKRNCMLDCNVWDDEGYCDKFCKGRKADSGYCYKLKAACYCYGLPDDSPTKTSGRCNPNVR.

A signal peptide spans 1 to 19 (MNCLMLIFVVFLLAFGVEC). The LCN-type CS-alpha/beta domain maps to 21–85 (KDDYPVDTAK…SPTKTSGRCN (65 aa)). 4 cysteine pairs are disulfide-bonded: C33–C84, C37–C60, C46–C67, and C50–C69.

Expressed by the venom gland.

The protein resides in the secreted. Inhibits voltage-gated sodium channels (Nav). The polypeptide is Toxin To14 (Tityus obscurus (Amazonian scorpion)).